The following is a 118-amino-acid chain: Ribosome-binding factor A (118 aa).

This sequence belongs to the RbfA family. As to quaternary structure, monomer. Binds 30S ribosomal subunits, but not 50S ribosomal subunits or 70S ribosomes.

The protein resides in the cytoplasm. Functionally, one of several proteins that assist in the late maturation steps of the functional core of the 30S ribosomal subunit. Associates with free 30S ribosomal subunits (but not with 30S subunits that are part of 70S ribosomes or polysomes). Required for efficient processing of 16S rRNA. May interact with the 5'-terminal helix region of 16S rRNA. This chain is Ribosome-binding factor A, found in Geobacter metallireducens (strain ATCC 53774 / DSM 7210 / GS-15).